We begin with the raw amino-acid sequence, 121 residues long: Snaclec coagulation factor IX-binding protein subunit A (121 aa).

The C-type lectin domain maps to 1–120 (YEGHCYQTFK…CGERNPFVCE (120 aa)). 2 cysteine pairs are disulfide-bonded: cysteine 22/cysteine 119 and cysteine 94/cysteine 111. The Ca(2+) site is built by serine 33, glutamate 35, and glutamate 39. Glutamate 120 contributes to the Ca(2+) binding site.

It belongs to the snaclec family. Heterodimer of subunits A and B; disulfide-linked. In terms of tissue distribution, expressed by the venom gland.

It localises to the secreted. Anticoagulant protein which binds to the gamma-carboxyglutamic acid-domain regions of factor IX (F9) (but not factor X) in the presence of calcium with a 1 to 1 stoichiometry. The sequence is that of Snaclec coagulation factor IX-binding protein subunit A from Gloydius halys (Chinese water mocassin).